Reading from the N-terminus, the 117-residue chain is MAGLVKLSCLVLACMIVAGPIATNAALSCGTVSGNLAACIGYLTQNGPLPRGCCTGVTNLNNMARTTPDRQQACRCLVGAANSFPTLNAARAAGLPKACGVNIPYKISKSTNCNSVR.

An N-terminal signal peptide occupies residues 1–25 (MAGLVKLSCLVLACMIVAGPIATNA). Intrachain disulfides connect Cys-29-Cys-76, Cys-39-Cys-53, Cys-54-Cys-99, and Cys-74-Cys-113.

This sequence belongs to the plant LTP family.

In terms of biological role, plant non-specific lipid-transfer proteins transfer phospholipids as well as galactolipids across membranes. May play a role in wax or cutin deposition in the cell walls of expanding epidermal cells and certain secretory tissues. The sequence is that of Non-specific lipid-transfer protein B (WAX9B) from Brassica oleracea var. italica (Broccoli).